The sequence spans 226 residues: 2,3-bisphosphoglycerate-dependent phosphoglycerate mutase (226 aa).

Substrate is bound by residues 8–15, 21–22, Arg-58, 109–112, Lys-120, 136–137, and 180–181; these read RHGQSVWN, TG, ERMY, RR, and GN. His-9 acts as the Tele-phosphohistidine intermediate in catalysis. Glu-109 functions as the Proton donor/acceptor in the catalytic mechanism.

Belongs to the phosphoglycerate mutase family. BPG-dependent PGAM subfamily.

The enzyme catalyses (2R)-2-phosphoglycerate = (2R)-3-phosphoglycerate. The protein operates within carbohydrate degradation; glycolysis; pyruvate from D-glyceraldehyde 3-phosphate: step 3/5. In terms of biological role, catalyzes the interconversion of 2-phosphoglycerate and 3-phosphoglycerate. The sequence is that of 2,3-bisphosphoglycerate-dependent phosphoglycerate mutase from Chlamydia muridarum (strain MoPn / Nigg).